Here is a 378-residue protein sequence, read N- to C-terminus: Queuine tRNA-ribosyltransferase (378 aa).

The Proton acceptor role is filled by D92. Substrate contacts are provided by residues 92-96, D146, Q188, and G215; that span reads DSGGF. Residues 246 to 252 form an RNA binding region; it reads GVGTHLE. Catalysis depends on D265, which acts as the Nucleophile. An RNA binding; important for wobble base 34 recognition region spans residues 270–274; the sequence is TRLAR. C303, C305, C308, and H334 together coordinate Zn(2+).

Belongs to the queuine tRNA-ribosyltransferase family. Homodimer. Within each dimer, one monomer is responsible for RNA recognition and catalysis, while the other monomer binds to the replacement base PreQ1. Zn(2+) is required as a cofactor.

It carries out the reaction 7-aminomethyl-7-carbaguanine + guanosine(34) in tRNA = 7-aminomethyl-7-carbaguanosine(34) in tRNA + guanine. It participates in tRNA modification; tRNA-queuosine biosynthesis. Functionally, catalyzes the base-exchange of a guanine (G) residue with the queuine precursor 7-aminomethyl-7-deazaguanine (PreQ1) at position 34 (anticodon wobble position) in tRNAs with GU(N) anticodons (tRNA-Asp, -Asn, -His and -Tyr). Catalysis occurs through a double-displacement mechanism. The nucleophile active site attacks the C1' of nucleotide 34 to detach the guanine base from the RNA, forming a covalent enzyme-RNA intermediate. The proton acceptor active site deprotonates the incoming PreQ1, allowing a nucleophilic attack on the C1' of the ribose to form the product. After dissociation, two additional enzymatic reactions on the tRNA convert PreQ1 to queuine (Q), resulting in the hypermodified nucleoside queuosine (7-(((4,5-cis-dihydroxy-2-cyclopenten-1-yl)amino)methyl)-7-deazaguanosine). In Thermosynechococcus vestitus (strain NIES-2133 / IAM M-273 / BP-1), this protein is Queuine tRNA-ribosyltransferase.